The sequence spans 745 residues: Elongation factor G, mitochondrial (745 aa).

The transit peptide at 1-15 (MSLITRLLTASSPLR) directs the protein to the mitochondrion. Positions 40–317 (DKIRNIGISA…AVLEYLPNPG (278 aa)) constitute a tr-type G domain. GTP-binding positions include 49–56 (AHIDSGKT), 116–120 (DTPGH), and 170–173 (NKLD).

The protein belongs to the TRAFAC class translation factor GTPase superfamily. Classic translation factor GTPase family. EF-G/EF-2 subfamily.

Its subcellular location is the mitochondrion. The protein operates within protein biosynthesis; polypeptide chain elongation. Functionally, mitochondrial GTPase that catalyzes the GTP-dependent ribosomal translocation step during translation elongation. During this step, the ribosome changes from the pre-translocational (PRE) to the post-translocational (POST) state as the newly formed A-site-bound peptidyl-tRNA and P-site-bound deacylated tRNA move to the P and E sites, respectively. Catalyzes the coordinated movement of the two tRNA molecules, the mRNA and conformational changes in the ribosome. Essential during development as it acts as a retrograde signal from mitochondria to the nucleus to slow down cell proliferation if mitochondrial energy output is low. This is Elongation factor G, mitochondrial (ico) from Drosophila ananassae (Fruit fly).